The following is a 403-amino-acid chain: Putative F-box/LRR-repeat protein At5g38386 (403 aa).

The F-box domain occupies 1 to 47 (MDHLSNLPDELLCHIMSFLTTKEAALISVLSKRWRNLIAFVPNLDIF). 6 LRR repeats span residues 64–91 (IRQL…SLCC), 93–119 (GGSY…DLSM), 131–156 (VFEN…VMNH), 175–203 (LKTL…SYSD), 243–274 (YLYF…SIKS), and 275–300 (VESR…VLEA).

In Arabidopsis thaliana (Mouse-ear cress), this protein is Putative F-box/LRR-repeat protein At5g38386.